Here is a 206-residue protein sequence, read N- to C-terminus: Small ribosomal subunit protein uS4 (206 aa).

The disordered stretch occupies residues 28–48; sequence YMERRPYGPGEHGRARKKQDS. An S4 RNA-binding domain is found at 95–160; the sequence is MRLDALVLRA…MPPFQVAAAG (66 aa).

This sequence belongs to the universal ribosomal protein uS4 family. Part of the 30S ribosomal subunit. Contacts protein S5. The interaction surface between S4 and S5 is involved in control of translational fidelity.

Functionally, one of the primary rRNA binding proteins, it binds directly to 16S rRNA where it nucleates assembly of the body of the 30S subunit. In terms of biological role, with S5 and S12 plays an important role in translational accuracy. This Paenarthrobacter aurescens (strain TC1) protein is Small ribosomal subunit protein uS4.